The primary structure comprises 516 residues: L-amino-acid oxidase (516 aa).

An N-terminal signal peptide occupies residues Met-1–Cys-18. An intrachain disulfide couples Cys-28 to Cys-189. FAD is bound by residues Met-61 to Ala-62, Glu-81 to Ala-82, Arg-89, and Gly-103 to Arg-106. Positions 106 and 239 each coordinate substrate. FAD is bound at residue Val-279. A disulfide bridge connects residues Cys-349 and Cys-430. The N-linked (GlcNAc...) asparagine glycan is linked to Asn-379. Position 390 (Tyr-390) interacts with substrate. Residues Glu-475 and Gly-482–Thr-487 each bind FAD. Residue Gly-482–Trp-483 participates in substrate binding.

Belongs to the flavin monoamine oxidase family. FIG1 subfamily. As to quaternary structure, homodimer; non-covalently linked. FAD serves as cofactor. N-glycosylated. As to expression, expressed by the venom gland.

It localises to the secreted. The enzyme catalyses an L-alpha-amino acid + O2 + H2O = a 2-oxocarboxylate + H2O2 + NH4(+). It catalyses the reaction L-leucine + O2 + H2O = 4-methyl-2-oxopentanoate + H2O2 + NH4(+). It carries out the reaction L-phenylalanine + O2 + H2O = 3-phenylpyruvate + H2O2 + NH4(+). The catalysed reaction is L-methionine + O2 + H2O = 4-methylsulfanyl-2-oxobutanoate + H2O2 + NH4(+). The enzyme catalyses L-arginine + O2 + H2O = 5-guanidino-2-oxopentanoate + H2O2 + NH4(+). In terms of biological role, catalyzes an oxidative deamination of predominantly hydrophobic and aromatic L-amino acids, thus producing hydrogen peroxide that may contribute to the diverse toxic effects of this enzyme. Is active on L-Arg, L-Phe, L-Met, and L-Leu and is weakly active on L-Val. Exhibits diverse biological activities, such as hemorrhage, hemolysis, edema, apoptosis of vascular endothelial cells or tumor cell lines, antibacterial and antiparasitic activities, as well as regulation of platelet aggregation. Its effect on platelets is controversial, since it either induces aggregation or inhibits agonist-induced aggregation. These different effects are probably due to different experimental conditions. This Crotalus adamanteus (Eastern diamondback rattlesnake) protein is L-amino-acid oxidase.